The chain runs to 128 residues: Probable 4-amino-4-deoxy-L-arabinose-phosphoundecaprenol flippase subunit ArnF (128 aa).

The Cytoplasmic segment spans residues 1–2; the sequence is MG. The chain crosses the membrane as a helical span at residues 3 to 23; it reads LMWGLFSVIIASAAQLSLGFA. Topologically, residues 24 to 35 are periplasmic; the sequence is ASHLPPMTHLWD. A helical membrane pass occupies residues 36–56; that stretch reads FIAALLAFGLDARILLLGLLG. Residues 57–76 lie on the Cytoplasmic side of the membrane; it reads YLLSVFCWYKTLHKLALSKA. A helical membrane pass occupies residues 77–97; sequence YALLSMSYVLVWIASMVLPGW. Residues 98-100 are Periplasmic-facing; the sequence is EGT. Residues 101-121 form a helical membrane-spanning segment; sequence FSLKALLGVACIMSGLMLIFL. Topologically, residues 122–128 are cytoplasmic; the sequence is PTTKQRY.

Belongs to the ArnF family. In terms of assembly, heterodimer of ArnE and ArnF.

The protein resides in the cell inner membrane. It functions in the pathway bacterial outer membrane biogenesis; lipopolysaccharide biosynthesis. Functionally, translocates 4-amino-4-deoxy-L-arabinose-phosphoundecaprenol (alpha-L-Ara4N-phosphoundecaprenol) from the cytoplasmic to the periplasmic side of the inner membrane. In Escherichia coli O127:H6 (strain E2348/69 / EPEC), this protein is Probable 4-amino-4-deoxy-L-arabinose-phosphoundecaprenol flippase subunit ArnF.